A 428-amino-acid polypeptide reads, in one-letter code: Enolase (428 aa).

Gln-163 contributes to the (2R)-2-phosphoglycerate binding site. Catalysis depends on Glu-205, which acts as the Proton donor. The Mg(2+) site is built by Asp-242, Glu-285, and Asp-312. Residues Lys-337, Arg-366, Ser-367, and Lys-388 each coordinate (2R)-2-phosphoglycerate. The active-site Proton acceptor is Lys-337.

Belongs to the enolase family. The cofactor is Mg(2+).

Its subcellular location is the cytoplasm. It is found in the secreted. The protein localises to the cell surface. The catalysed reaction is (2R)-2-phosphoglycerate = phosphoenolpyruvate + H2O. The protein operates within carbohydrate degradation; glycolysis; pyruvate from D-glyceraldehyde 3-phosphate: step 4/5. Its function is as follows. Catalyzes the reversible conversion of 2-phosphoglycerate (2-PG) into phosphoenolpyruvate (PEP). It is essential for the degradation of carbohydrates via glycolysis. In Persephonella marina (strain DSM 14350 / EX-H1), this protein is Enolase.